The sequence spans 137 residues: uncharacterized protein (137 aa).

This sequence to E.coli YfdK.

This is an uncharacterized protein from Escherichia coli (strain K12).